We begin with the raw amino-acid sequence, 766 residues long: Pentatricopeptide repeat-containing protein At3g61520, mitochondrial (766 aa).

Residues 1-30 (MSIMLSISRRRNSYILLNHSRFLRRFSYDV) constitute a mitochondrion transit peptide. 16 PPR repeats span residues 151-181 (TVVA…LDSN), 184-218 (NSQV…ESVF), 221-257 (NRIT…GVSP), 258-292 (NSVW…KTPL), 293-327 (EAPP…KIRP), 328-358 (DVVT…MRGK), 369-404 (DSIH…RCAP), 405-439 (NAVT…EIKP), 440-474 (NVVT…GVKG), 475-509 (NVVT…GCSP), 510-544 (DAKI…GFSL), 545-579 (DLLA…GKKP), 580-614 (DSIT…GLDP), 615-650 (TVTT…KVNP), 651-685 (NTVI…MVRP), and 686-720 (NVET…SCEP).

It belongs to the PPR family. P subfamily.

It is found in the mitochondrion. The protein is Pentatricopeptide repeat-containing protein At3g61520, mitochondrial of Arabidopsis thaliana (Mouse-ear cress).